Reading from the N-terminus, the 811-residue chain is Zinc finger protein 839 (811 aa).

The C2H2-type zinc-finger motif lies at 197 to 222 (FKCQTCEKSYIGKGGLARHFKLNPGH). 3 disordered regions span residues 329–349 (QRRA…RASP), 455–555 (PDNL…NGSV), and 612–654 (ALEH…AEAG). The span at 476-485 (SSEKREREAA) shows a compositional bias: basic and acidic residues. Residues 501–510 (SNDTTESLAA) are compositionally biased toward polar residues.

This chain is Zinc finger protein 839 (ZNF839), found in Homo sapiens (Human).